We begin with the raw amino-acid sequence, 207 residues long: Outer-membrane lipoprotein LolB (207 aa).

The first 21 residues, 1-21, serve as a signal peptide directing secretion; the sequence is MPTNTVRCLRLLPLASVLLAA. Cysteine 22 carries N-palmitoyl cysteine lipidation. Cysteine 22 carries the S-diacylglycerol cysteine lipid modification.

The protein belongs to the LolB family. Monomer.

It is found in the cell outer membrane. Functionally, plays a critical role in the incorporation of lipoproteins in the outer membrane after they are released by the LolA protein. This chain is Outer-membrane lipoprotein LolB, found in Pectobacterium carotovorum subsp. carotovorum (strain PC1).